The primary structure comprises 1323 residues: Regulatory protein ADR1 (1323 aa).

Ser54 bears the Phosphoserine mark. 2 consecutive C2H2-type zinc fingers follow at residues 104 to 126 and 132 to 155; these read FVCEVCTRAFARQEHLKRHYRSH and YPCGLCNRCFTRRDLLIRHAQKIH. A disordered region spans residues 175-216; that stretch reads KARKNSASSVKFQTPTYGTPDNGNFLNRTTANTRRKASPEAN. Positions 179 to 206 are enriched in polar residues; the sequence is NSASSVKFQTPTYGTPDNGNFLNRTTAN. A phosphothreonine mark is found at Thr188 and Thr193. Ser230 carries the post-translational modification Phosphoserine; by PKA; in vitro. Ser258 carries the post-translational modification Phosphoserine. Residue Thr259 is modified to Phosphothreonine. Phosphoserine occurs at positions 299, 323, and 325. A Phosphothreonine modification is found at Thr327.

Post-translationally, phosphorylation at Ser-230 by cAMP-dependent protein kinase A does not affect DNA binding but appears to prevent transcription of ADH2 during glucose repression.

The protein resides in the nucleus. Functionally, required for transcriptional activation of glucose-repressible alcohol dehydrogenase (ADH2). The chain is Regulatory protein ADR1 (ADR1) from Saccharomyces cerevisiae (strain ATCC 204508 / S288c) (Baker's yeast).